A 303-amino-acid polypeptide reads, in one-letter code: Sulfate adenylyltransferase subunit 2 (303 aa).

Positions 281-303 (RQGRVIDHDSSGSMEKKKQEGYF) are disordered.

It belongs to the PAPS reductase family. CysD subfamily. In terms of assembly, heterodimer composed of CysD, the smaller subunit, and CysN.

The enzyme catalyses sulfate + ATP + H(+) = adenosine 5'-phosphosulfate + diphosphate. The protein operates within sulfur metabolism; hydrogen sulfide biosynthesis; sulfite from sulfate: step 1/3. In terms of biological role, with CysN forms the ATP sulfurylase (ATPS) that catalyzes the adenylation of sulfate producing adenosine 5'-phosphosulfate (APS) and diphosphate, the first enzymatic step in sulfur assimilation pathway. APS synthesis involves the formation of a high-energy phosphoric-sulfuric acid anhydride bond driven by GTP hydrolysis by CysN coupled to ATP hydrolysis by CysD. The sequence is that of Sulfate adenylyltransferase subunit 2 from Saccharophagus degradans (strain 2-40 / ATCC 43961 / DSM 17024).